A 397-amino-acid chain; its full sequence is LIM/homeobox protein Lhx9 (397 aa).

2 LIM zinc-binding domains span residues 69–130 (ALCA…RFSV) and 131–193 (QRCA…LLQG). Disordered stretches follow at residues 248–272 (ENEA…RMRT) and 330–364 (ENGG…TLTD). Residues 267-326 (TKRMRTSFKHHQLRTMKSYFAINHNPDAKDLKQLAQKTGLTKRVLQVWFQNARAKFRRNL) constitute a DNA-binding region (homeobox).

In terms of assembly, interacts with LDB1 and LDB2.

Its subcellular location is the nucleus. Functionally, involved in gonadal development. This Bos taurus (Bovine) protein is LIM/homeobox protein Lhx9 (LHX9).